A 241-amino-acid polypeptide reads, in one-letter code: High mobility group B protein 7 (241 aa).

2 stretches are compositionally biased toward polar residues: residues 1–11 and 20–29; these read MAGPSTTSNAP and ETSSNTSTTL. Disordered regions lie at residues 1–30, 75–116, and 174–241; these read MAGP…TTLR, TQAE…NKPK, and EYNK…LDDY. Positions 77–90 are enriched in basic and acidic residues; that stretch reads AEAKKKPAEKKKTT. Positions 115 to 183 form a DNA-binding region, HMG box; it reads PKRPLTAFFI…EYNKSLESND (69 aa). Composition is skewed to acidic residues over residues 182–221 and 229–241; these read NDAD…ENTD and GKEE…LDDY.

This sequence belongs to the HMGB family. Phosphorylated. As to expression, expressed at low levels in lateral roots, root tips, cotyledons, leaves and flowers (including pedicels, but excluding styles).

The protein resides in the nucleus. In terms of biological role, binds preferentially double-stranded supercoiled DNA. Required for karyogamy during female gametophyte development, when the two polar nuclei fuse to form the diploid central cell nucleus. In Arabidopsis thaliana (Mouse-ear cress), this protein is High mobility group B protein 7 (HMGB7).